Reading from the N-terminus, the 421-residue chain is 3-isopropylmalate dehydratase large subunit (421 aa).

Cysteine 302, cysteine 362, and cysteine 365 together coordinate [4Fe-4S] cluster.

It belongs to the aconitase/IPM isomerase family. LeuC type 2 subfamily. In terms of assembly, heterodimer of LeuC and LeuD. [4Fe-4S] cluster serves as cofactor.

The enzyme catalyses (2R,3S)-3-isopropylmalate = (2S)-2-isopropylmalate. The protein operates within amino-acid biosynthesis; L-leucine biosynthesis; L-leucine from 3-methyl-2-oxobutanoate: step 2/4. Functionally, catalyzes the isomerization between 2-isopropylmalate and 3-isopropylmalate, via the formation of 2-isopropylmaleate. The sequence is that of 3-isopropylmalate dehydratase large subunit from Campylobacter concisus (strain 13826).